We begin with the raw amino-acid sequence, 552 residues long: Berberine bridge enzyme-like 6 (552 aa).

The N-terminal stretch at 1–16 (MKEAFVFLLCLTNKFP) is a signal peptide. A disulfide bridge links C56 with C119. Residues N76, N161, N280, N364, N419, and N463 are each glycosylated (N-linked (GlcNAc...) asparagine). An FAD-binding PCMH-type domain is found at 93-270 (FSSPNFKKLL…LSWKINLVEV (178 aa)). The 6-(S-cysteinyl)-8alpha-(pros-histidyl)-FAD (His-Cys) cross-link spans 134–196 (HDNEGFSYMS…QTLAFPAGVC (63 aa)).

This sequence belongs to the oxygen-dependent FAD-linked oxidoreductase family. It depends on FAD as a cofactor. The FAD cofactor is bound via a bicovalent 6-S-cysteinyl, 8alpha-N1-histidyl FAD linkage.

It localises to the secreted. The protein localises to the cell wall. Probable flavin-dependent oxidoreductase. The sequence is that of Berberine bridge enzyme-like 6 from Arabidopsis thaliana (Mouse-ear cress).